Here is a 1755-residue protein sequence, read N- to C-terminus: MESQQLSNYPHISHGSACASVTSKEVHTNQDPLDVSASKIQEYDKASTKANSQQTTTPASSAVPENPHHASPQPASVPPPQNGPYPQQCMMTQNQANPSGWSFYGHPSMIPYTPYQMSPMYFPPGPQSQFPQYPSSVGTPLSTPSPESGNTFTDSSSADSDMTSTKKYVRPPPMLTSPNDFPNWVKTYIKFLQNSNLGGIIPTVNGKPVRQITDDELTFLYNTFQIFAPSQFLPTWVKDILSVDYTDIMKILSKSIEKMQSDTQEANDIVTLANLQYNGSTPADAFETKVTNIIDRLNNNGIHINNKVACQLIMRGLSGEYKFLRYTRHRHLNMTVAELFLDIHAIYEEQQGSRNSKPNYRRNPSDEKNDSRSYTNTTKPKVIARNPQKTNNSKSKTARAHNVSTSNNSPSTDNDSISKSTTEPIQLNNKHDLHLGQKLTESTVNHTNHSDDELPGHLLLDSGASRTLIRSAHHIHSASSNPDINVVDAQKRNIPINAIGDLQFHFQDNTKTSIKVLHTPNIAYDLLSLNELAAVDITACFTKNVLERSDGTVLAPIVKYGDFYWVSKKYLLPSNISVPTINNVHTSESTRKYPYPFIHRMLAHANAQTIRYSLKNNTITYFNESDVDWSSAIDYQCPDCLIGKSTKHRHIKGSRLKYQNSYEPFQYLHTDIFGPVHNLPNSAPSYFISFTDETTKFRWVYPLHDRREDSILDVFTTILAFIKNQFQASVLVIQMDRGSEYTNRTLHKFLEKNGITPCYTTTADSRAHGVAERLNRTLLDDCRTQLQCSGLPNHLWFSAIEFSTIVRNSLASPKSKKSARQHAGLAGLDISTLLPFGQPVIVNDHNPNSKIHPRGIPGYALHPSRNSYGYIIYLPSLKKTVDTTNYVILQGKESRLDQFNYDALTFDEDLNRLTASYHSFIASNEIQESNDLNIESDHDFQSDIELHPEQPRNVLSKAVSPTDSTPPSTHTEDSKRVSKTNIRAPREVDPNISESNILPSKKRSSTPQISNIESTGSGGMHKLNVPLLAPMSQSNTHESSHASKSKDFRHSDSYSENETNHTNVPISSTGGTNNKTVPQISDQETEKRIIHRSPSIDASPPENNSSHNIVPIKTPTTVSEQNTEESIIADLPLPDLPPESPTEFPDPFKELPPINSHQTNSSLGGIGDSNAYTTINSKKRSLEDNETEIKVSRDTWNTKNMRSLEPPRSKKRIHLIAAVKAVKSIKPIRTTLRYDEAITYNKDIKEKEKYIEAYHKEVNQLLKMNTWDTDKYYDRKEIDPKRVINSMFIFNRKRDGTHKARFVARGDIQHPDTYDSGMQSNTVHHYALMTSLSLALDNNYYITQLDISSAYLYADIKEELYIRPPPHLGMNDKLIRLKKSLYGLKQSGANWYETIKSYLIKQCGMEEVRGWSCVFKNSQVTICLFVDDMILFSKDLNANKKIITTLKKQYDTKIINLGESDNEIQYDILGLEIKYQRGKYMKLGMENSLTEKIPKLNVPLNPKGRKLSAPGQPGLYIDQDELEIDEDEYKEKVHEMQKLIGLASYVGYKFRFDLLYYINTLAQHILFPSRQVLDMTYELIQFMWDTRDKQLIWHKNKPTEPDNKLVAISDASYGNQPYYKSQIGNIYLLNGKVIGGKSTKASLTCTSTTEAEIHAISESVPLLNNLSHLVQELNKKPITKGLLTDSKSTISIIISNNEEKFRNRFFGTKAMRLRDEVSGNHLHVCYIETKKNIADVMTKPLPIKTFKLLTNKWIH.

Composition is skewed to polar residues over residues 1 to 10, 48 to 60, and 127 to 152; these read MESQQLSNYP, TKAN…TPAS, and QSQF…GNTF. Disordered stretches follow at residues 1 to 93, 126 to 173, and 352 to 421; these read MESQ…MMTQ, PQSQ…RPPP, and GSRN…SKST. Low complexity predominate over residues 153–165; sequence TDSSSADSDMTST. Residues 299–401 form an RNA-binding region; the sequence is NNGIHINNKV…NSKSKTARAH (103 aa). Low complexity predominate over residues 402–418; the sequence is NVSTSNNSPSTDNDSIS. The active-site For protease activity; shared with dimeric partner is Asp-461. The interval 583–640 is integrase-type zinc finger-like; it reads NVHTSESTRKYPYPFIHRMLAHANAQTIRYSLKNNTITYFNESDVDWSSAIDYQCPDC. The 176-residue stretch at 660–835 folds into the Integrase catalytic domain; it reads NSYEPFQYLH…AGLDISTLLP (176 aa). Residues Asp-671 and Asp-736 each contribute to the Mg(2+) site. Disordered regions lie at residues 956-1087, 1092-1111, and 1130-1187; these read SKAV…ETEK, RSPS…NIVP, and DLPL…DNET. A compositionally biased stretch (low complexity) spans 960–969; that stretch reads SPTDSTPPST. The span at 1005-1015 shows a compositional bias: polar residues; that stretch reads STPQISNIEST. Positions 1038–1053 are enriched in basic and acidic residues; the sequence is ESSHASKSKDFRHSDS. Polar residues-rich tracts occupy residues 1054 to 1082 and 1101 to 1111; these read YSEN…QISD and PENNSSHNIVP. Positions 1178-1212 match the Bipartite nuclear localization signal motif; it reads KKRSLEDNETEIKVSRDTWNTKNMRSLEPPRSKKR. A Reverse transcriptase Ty1/copia-type domain is found at 1338-1476; the sequence is NNYYITQLDI…DILGLEIKYQ (139 aa). Residues Asp-1346, Asp-1427, Asp-1428, Asp-1610, Glu-1652, and Asp-1685 each contribute to the Mg(2+) site. Residues 1610–1752 enclose the RNase H Ty1/copia-type domain; sequence DASYGNQPYY…IKTFKLLTNK (143 aa).

As to quaternary structure, the capsid protein forms a homotrimer, from which the VLPs are assembled. The protease is a homodimer, whose active site consists of two apposed aspartic acid residues. In terms of processing, initially, virus-like particles (VLPs) are composed of the structural unprocessed proteins Gag and Gag-Pol, and also contain the host initiator methionine tRNA (tRNA(i)-Met) which serves as a primer for minus-strand DNA synthesis, and a dimer of genomic Ty RNA. Processing of the polyproteins occurs within the particle and proceeds by an ordered pathway, called maturation. First, the protease (PR) is released by autocatalytic cleavage of the Gag-Pol polyprotein yielding capsid protein p45 and a Pol-p154 precursor protein. This cleavage is a prerequisite for subsequent processing of Pol-p154 at the remaining sites to release the mature structural and catalytic proteins. Maturation takes place prior to the RT reaction and is required to produce transposition-competent VLPs.

The protein resides in the cytoplasm. It localises to the nucleus. The enzyme catalyses DNA(n) + a 2'-deoxyribonucleoside 5'-triphosphate = DNA(n+1) + diphosphate. It catalyses the reaction Endonucleolytic cleavage to 5'-phosphomonoester.. Functionally, capsid protein (CA) is the structural component of the virus-like particle (VLP), forming the shell that encapsulates the retrotransposons dimeric RNA genome. The particles are assembled from trimer-clustered units and there are holes in the capsid shells that allow for the diffusion of macromolecules. CA also has nucleocapsid-like chaperone activity, promoting primer tRNA(i)-Met annealing to the multipartite primer-binding site (PBS), dimerization of Ty1 RNA and initiation of reverse transcription. In terms of biological role, the aspartyl protease (PR) mediates the proteolytic cleavages of the Gag and Gag-Pol polyproteins after assembly of the VLP. Reverse transcriptase/ribonuclease H (RT) is a multifunctional enzyme that catalyzes the conversion of the retro-elements RNA genome into dsDNA within the VLP. The enzyme displays a DNA polymerase activity that can copy either DNA or RNA templates, and a ribonuclease H (RNase H) activity that cleaves the RNA strand of RNA-DNA heteroduplexes during plus-strand synthesis and hydrolyzes RNA primers. The conversion leads to a linear dsDNA copy of the retrotransposon that includes long terminal repeats (LTRs) at both ends. Its function is as follows. Integrase (IN) targets the VLP to the nucleus, where a subparticle preintegration complex (PIC) containing at least integrase and the newly synthesized dsDNA copy of the retrotransposon must transit the nuclear membrane. Once in the nucleus, integrase performs the integration of the dsDNA into the host genome. This chain is Transposon Ty1-DR5 Gag-Pol polyprotein (TY1B-DR5), found in Saccharomyces cerevisiae (strain ATCC 204508 / S288c) (Baker's yeast).